A 78-amino-acid chain; its full sequence is ATP synthase subunit c (78 aa).

Transmembrane regions (helical) follow at residues 12-32 (IGAG…GHVV) and 54-74 (FIGI…ALLL).

Belongs to the ATPase C chain family. F-type ATPases have 2 components, F(1) - the catalytic core - and F(0) - the membrane proton channel. F(1) has five subunits: alpha(3), beta(3), gamma(1), delta(1), epsilon(1). F(0) has four main subunits: a(1), b(1), b'(1) and c(10-14). The alpha and beta chains form an alternating ring which encloses part of the gamma chain. F(1) is attached to F(0) by a central stalk formed by the gamma and epsilon chains, while a peripheral stalk is formed by the delta, b and b' chains.

The protein resides in the cellular chromatophore membrane. Functionally, f(1)F(0) ATP synthase produces ATP from ADP in the presence of a proton or sodium gradient. F-type ATPases consist of two structural domains, F(1) containing the extramembraneous catalytic core and F(0) containing the membrane proton channel, linked together by a central stalk and a peripheral stalk. During catalysis, ATP synthesis in the catalytic domain of F(1) is coupled via a rotary mechanism of the central stalk subunits to proton translocation. Key component of the F(0) channel; it plays a direct role in translocation across the membrane. A homomeric c-ring of between 10-14 subunits forms the central stalk rotor element with the F(1) delta and epsilon subunits. This Rhodobacter capsulatus (Rhodopseudomonas capsulata) protein is ATP synthase subunit c.